The primary structure comprises 396 residues: Obg-like ATPase 1 (396 aa).

The region spanning 23-283 (LKIGIVGLPN…LSAEERQKYL (261 aa)) is the OBG-type G domain. 32–37 (NVGKST) lines the ATP pocket. Mg(2+) is bound by residues serine 36 and threonine 56. ATP is bound at residue leucine 231. Positions 267 to 274 (LELRLQEL) match the Nuclear export signal motif. Position 294 is an N6-acetyllysine (lysine 294). The TGS domain maps to 304 to 387 (QLEYFFTAGP…EDGDIIFFKF (84 aa)).

This sequence belongs to the TRAFAC class OBG-HflX-like GTPase superfamily. OBG GTPase family. YchF/OLA1 subfamily. As to quaternary structure, monomer. The cofactor is Mg(2+).

Its subcellular location is the cytoplasm. The protein resides in the nucleus. It is found in the nucleolus. Hydrolyzes ATP, and can also hydrolyze GTP with lower efficiency. Has lower affinity for GTP. The polypeptide is Obg-like ATPase 1 (Bos taurus (Bovine)).